Consider the following 46-residue polypeptide: Defensin-like protein 2 (46 aa).

4 disulfide bridges follow: Cys3/Cys46, Cys13/Cys33, Cys19/Cys40, and Cys23/Cys42.

Monomer. Present in seeds, cotyledons and leaves. Not found in roots or stems.

Its function is as follows. Has antibacterial activity against the Gram-positive bacterium S.aureus and the Gram-negative bacteria E.coli and P.syringae. Does not have antibacterial activity against the phytopathogenic bacteria R.solanacearum, Rhataybacter sp and Erwinia sp. Does not inhibit trypsin, chymotrypsin or alpha-amylases. The chain is Defensin-like protein 2 from Vigna unguiculata (Cowpea).